A 1167-amino-acid chain; its full sequence is DNA-directed RNA polymerase subunit beta (1167 aa).

The interval 1 to 27 (MAVSPANQATAATTSAESRSEATGIPG) is disordered. Positions 9 to 23 (ATAATTSAESRSEAT) are enriched in low complexity.

This sequence belongs to the RNA polymerase beta chain family. In terms of assembly, the RNAP catalytic core consists of 2 alpha, 1 beta, 1 beta' and 1 omega subunit. When a sigma factor is associated with the core the holoenzyme is formed, which can initiate transcription.

The catalysed reaction is RNA(n) + a ribonucleoside 5'-triphosphate = RNA(n+1) + diphosphate. Functionally, DNA-dependent RNA polymerase catalyzes the transcription of DNA into RNA using the four ribonucleoside triphosphates as substrates. This chain is DNA-directed RNA polymerase subunit beta, found in Amycolatopsis mediterranei (strain S699) (Nocardia mediterranei).